We begin with the raw amino-acid sequence, 482 residues long: ATP synthase subunit beta (482 aa).

162–169 (GGAGVGKT) contributes to the ATP binding site.

F-type ATPases have 2 components, CF(1) - the catalytic core - and CF(0) - the membrane proton channel. CF(1) has five subunits: alpha(3), beta(3), gamma(1), delta(1), epsilon(1). CF(0) has four main subunits: a(1), b(1), b'(1) and c(9-12).

It is found in the cellular thylakoid membrane. The enzyme catalyses ATP + H2O + 4 H(+)(in) = ADP + phosphate + 5 H(+)(out). Inhibited by dicyclohexylcarbodiimide. Its function is as follows. Produces ATP from ADP in the presence of a proton gradient across the membrane. The catalytic sites are hosted primarily by the beta subunits. The complex from the organism is particularly stable to disruption and remains functional after 6 hrs at 55 degrees Celsius. The sequence is that of ATP synthase subunit beta from Thermosynechococcus vestitus (strain NIES-2133 / IAM M-273 / BP-1).